The chain runs to 898 residues: Phosphoenolpyruvate carboxylase (898 aa).

Residues H134 and K564 contribute to the active site.

It belongs to the PEPCase type 1 family. Mg(2+) is required as a cofactor.

The catalysed reaction is oxaloacetate + phosphate = phosphoenolpyruvate + hydrogencarbonate. Its function is as follows. Forms oxaloacetate, a four-carbon dicarboxylic acid source for the tricarboxylic acid cycle. This chain is Phosphoenolpyruvate carboxylase, found in Chromobacterium violaceum (strain ATCC 12472 / DSM 30191 / JCM 1249 / CCUG 213 / NBRC 12614 / NCIMB 9131 / NCTC 9757 / MK).